The sequence spans 383 residues: Lipid-A-disaccharide synthase (383 aa).

The protein belongs to the LpxB family.

The enzyme catalyses a lipid X + a UDP-2-N,3-O-bis[(3R)-3-hydroxyacyl]-alpha-D-glucosamine = a lipid A disaccharide + UDP + H(+). Its pathway is bacterial outer membrane biogenesis; LPS lipid A biosynthesis. Condensation of UDP-2,3-diacylglucosamine and 2,3-diacylglucosamine-1-phosphate to form lipid A disaccharide, a precursor of lipid A, a phosphorylated glycolipid that anchors the lipopolysaccharide to the outer membrane of the cell. This chain is Lipid-A-disaccharide synthase, found in Aliivibrio fischeri (strain MJ11) (Vibrio fischeri).